The following is a 147-amino-acid chain: Methylglyoxal synthase (147 aa).

Residues 4 to 147 (VSVPATKRIA…LLNFELLCES (144 aa)) form the MGS-like domain. Substrate contacts are provided by residues His17, Lys21, 43 to 46 (TGTT), and 63 to 64 (SG). Asp69 acts as the Proton donor/acceptor in catalysis. His96 is a binding site for substrate.

The protein belongs to the methylglyoxal synthase family.

The enzyme catalyses dihydroxyacetone phosphate = methylglyoxal + phosphate. Catalyzes the formation of methylglyoxal from dihydroxyacetone phosphate. This chain is Methylglyoxal synthase, found in Leptospira borgpetersenii serovar Hardjo-bovis (strain JB197).